Here is a 469-residue protein sequence, read N- to C-terminus: Phosphatidylcholine:ceramide cholinephosphotransferase 1 (469 aa).

Residues 40 to 177 (TTKIGPKLET…GDKPASPHDR (138 aa)) form a disordered region. 3 stretches are compositionally biased toward basic and acidic residues: residues 72–91 (AAEK…HEET), 100–117 (SHHD…GDGK), and 162–177 (VRLE…PHDR). 6 helical membrane passes run 186-206 (LVAF…LSWI), 231-251 (LRLC…LILF), 262-282 (LCFI…VTPV), 300-320 (TFSL…LNLF), 327-347 (LCGD…ALFI), and 355-375 (FYIL…FLVL). Residue His-336 is part of the active site. The Cytoplasmic portion of the chain corresponds to 376–469 (SHGHYTIDVI…RNGAARPAFE (94 aa)). Catalysis depends on residues His-379 and Asp-383.

It belongs to the sphingomyelin synthase family.

The protein localises to the golgi apparatus membrane. The enzyme catalyses an N-acylsphing-4-enine + a 1,2-diacyl-sn-glycero-3-phosphocholine = a sphingomyelin + a 1,2-diacyl-sn-glycerol. It carries out the reaction an N-acyl-15-methylhexadecasphing-4-enine + a 1,2-diacyl-sn-glycero-3-phosphocholine = an N-acyl-15-methylhexadecasphing-4-enine-1-phosphocholine + a 1,2-diacyl-sn-glycerol. It participates in lipid metabolism; sphingolipid metabolism. In terms of biological role, sphingomyelin synthases (SM synthase or SMS) synthesize the sphingolipid sphingomyelin (SM) through transfer of the phosphatidyl head group of 1,2-diacyl-sn-glycero-3-phosphocholine (phosphatidylcholine, PC) on to the primary hydroxyl of ceramide (N-acylsphingoid base), yielding 1,2-diacyl-sn-glycerol (diacylglycerol, DAG) as a side product. Functions as a bidirectional lipid cholinephosphotransferases capable of converting PC and ceramide to SM and DAG and vice versa depending on the respective levels of ceramide and DAG as phosphocholine acceptors, respectively. The polypeptide is Phosphatidylcholine:ceramide cholinephosphotransferase 1 (sms-1) (Caenorhabditis elegans).